A 208-amino-acid polypeptide reads, in one-letter code: Large ribosomal subunit protein uL3 (208 aa).

The disordered stretch occupies residues 123–147; that stretch reads RHGQSRGPMAHGSRYHRRPGSMGPV.

The protein belongs to the universal ribosomal protein uL3 family. In terms of assembly, part of the 50S ribosomal subunit. Forms a cluster with proteins L14 and L19.

One of the primary rRNA binding proteins, it binds directly near the 3'-end of the 23S rRNA, where it nucleates assembly of the 50S subunit. This Streptococcus uberis (strain ATCC BAA-854 / 0140J) protein is Large ribosomal subunit protein uL3.